The sequence spans 368 residues: Agmatine deiminase (368 aa).

The Amidino-cysteine intermediate role is filled by C357.

Belongs to the agmatine deiminase family. As to quaternary structure, homodimer.

It carries out the reaction agmatine + H2O = N-carbamoylputrescine + NH4(+). It functions in the pathway amine and polyamine biosynthesis; putrescine biosynthesis via agmatine pathway; N-carbamoylputrescine from agmatine: step 1/1. In terms of biological role, mediates the hydrolysis of agmatine into N-carbamoylputrescine in the arginine decarboxylase (ADC) pathway of putrescine biosynthesis, a basic polyamine. The protein is Agmatine deiminase of Pseudomonas syringae pv. syringae (strain B728a).